We begin with the raw amino-acid sequence, 119 residues long: Circadian clock oscillator protein KaiB (119 aa).

Belongs to the KaiB family. May undergo a major conformational rearrangment; in the free state forms homooligomers. When bound to KaiC switches to a monomeric thioredoxin-fold (KaiB(fs)). The active oscillator complex is probably KaiC(6):KaiB(6).

Its function is as follows. Component of the KaiBC clock protein complex, which constitutes the main circadian regulator in cyanobacteria; it may modify the ATPase activity of KaiC. In terms of biological role, may be a metamorphic protein which reversibly switches between an inactive tetrameric fold and a rare, thioredoxin-like monomeric fold (KaiB(fs)). KaiB(fs) binds phospho-KaiC, and perhaps clock output effectors. The sequence is that of Circadian clock oscillator protein KaiB from Prochlorococcus marinus (strain MIT 9303).